A 295-amino-acid polypeptide reads, in one-letter code: Ankyrin repeat and SOCS box protein 17 (295 aa).

The ANK repeat unit spans residues 146 to 176; sequence SGITPLFYVAQTRQSNIFKILLQYGILEREK. Residues 232 to 295 enclose the SOCS box domain; it reads LGRRPIISNW…RLQNYLNLEI (64 aa).

The protein belongs to the ankyrin SOCS box (ASB) family.

It functions in the pathway protein modification; protein ubiquitination. Functionally, may be a substrate-recognition component of a SCF-like ECS (Elongin-Cullin-SOCS-box protein) E3 ubiquitin-protein ligase complex which mediates the ubiquitination and subsequent proteasomal degradation of target proteins. The chain is Ankyrin repeat and SOCS box protein 17 (ASB17) from Macaca fascicularis (Crab-eating macaque).